A 464-amino-acid chain; its full sequence is ATP synthase subunit beta (464 aa).

151–158 is an ATP binding site; that stretch reads GGAGVGKT.

This sequence belongs to the ATPase alpha/beta chains family. F-type ATPases have 2 components, CF(1) - the catalytic core - and CF(0) - the membrane proton channel. CF(1) has five subunits: alpha(3), beta(3), gamma(1), delta(1), epsilon(1). CF(0) has three main subunits: a(1), b(2) and c(9-12). The alpha and beta chains form an alternating ring which encloses part of the gamma chain. CF(1) is attached to CF(0) by a central stalk formed by the gamma and epsilon chains, while a peripheral stalk is formed by the delta and b chains.

Its subcellular location is the cell membrane. The enzyme catalyses ATP + H2O + 4 H(+)(in) = ADP + phosphate + 5 H(+)(out). In terms of biological role, produces ATP from ADP in the presence of a proton gradient across the membrane. The catalytic sites are hosted primarily by the beta subunits. The chain is ATP synthase subunit beta from Bacillus cytotoxicus (strain DSM 22905 / CIP 110041 / 391-98 / NVH 391-98).